The chain runs to 530 residues: AarF domain-containing protein kinase 1 (530 aa).

The Protein kinase domain maps to 155 to 467; that stretch reads SFDDTPLGTA…ASSFLNMSRC (313 aa). Residues 161–169 and lysine 183 contribute to the ATP site; that span reads LGTASLAQV. Aspartate 315 (proton acceptor) is an active-site residue.

Belongs to the protein kinase superfamily. ADCK protein kinase family.

It is found in the mitochondrion. Functionally, appears to be essential for maintaining mitochondrial cristae formation and mitochondrial function by acting via YME1L1 in a kinase-independent manner to regulate essential mitochondrial structural proteins OPA1 and IMMT. The action of this enzyme is not yet clear. It is not known if it has protein kinase activity and what type of substrate it would phosphorylate (Ser, Thr or Tyr). The protein is AarF domain-containing protein kinase 1 of Homo sapiens (Human).